Reading from the N-terminus, the 545-residue chain is CWF19-like protein 1 homolog (545 aa).

The interval 306 to 329 is disordered; it reads YFYDMDGGRRKRQGGDNNKRDKRP.

It belongs to the CWF19 family.

This chain is CWF19-like protein 1 homolog, found in Drosophila melanogaster (Fruit fly).